The following is a 1488-amino-acid chain: Chromosome partition protein MukB (1488 aa).

34-41 (GGNGAGKS) is an ATP binding site. 3 coiled-coil regions span residues 326 to 418 (LEAD…QYNQ), 444 to 472 (LDTF…QTAH), and 509 to 602 (RHLA…QRAP). Positions 666-783 (PGGAEDQRLN…SLPIFGRAAR (118 aa)) are flexible hinge. 3 coiled-coil regions span residues 835–923 (EAEI…AKLE), 977–1116 (EMLS…AKAG), and 1209–1265 (VEAI…LQSV). The segment at 1049–1074 (ADSGAEERARQRRDELHAQLSNNRSR) is disordered. Residues 1051-1065 (SGAEERARQRRDELH) show a composition bias toward basic and acidic residues.

Belongs to the SMC family. MukB subfamily. As to quaternary structure, homodimerization via its hinge domain. Binds to DNA via its C-terminal region. Interacts, and probably forms a ternary complex, with MukE and MukF via its C-terminal region. The complex formation is stimulated by calcium or magnesium. Interacts with tubulin-related protein FtsZ.

The protein localises to the cytoplasm. Its subcellular location is the nucleoid. Functionally, plays a central role in chromosome condensation, segregation and cell cycle progression. Functions as a homodimer, which is essential for chromosome partition. Involved in negative DNA supercoiling in vivo, and by this means organize and compact chromosomes. May achieve or facilitate chromosome segregation by condensation DNA from both sides of a centrally located replisome during cell division. This Salmonella arizonae (strain ATCC BAA-731 / CDC346-86 / RSK2980) protein is Chromosome partition protein MukB.